Here is a 154-residue protein sequence, read N- to C-terminus: Ascorbate-specific PTS system EIIA component (154 aa).

Residues 6 to 150 form the PTS EIIA type-2 domain; the sequence is SLAENNSIRL…QEVLDLIDRT (145 aa). Histidine 68 acts as the Tele-phosphohistidine intermediate in catalysis. At histidine 68 the chain carries Phosphohistidine.

It is found in the cytoplasm. In terms of biological role, the phosphoenolpyruvate-dependent sugar phosphotransferase system (sugar PTS), a major carbohydrate active transport system, catalyzes the phosphorylation of incoming sugar substrates concomitantly with their translocation across the cell membrane. The enzyme II UlaABC PTS system is involved in ascorbate transport. This chain is Ascorbate-specific PTS system EIIA component (ulaC), found in Salmonella choleraesuis (strain SC-B67).